Here is a 252-residue protein sequence, read N- to C-terminus: Gamma carbonic anhydrase-like 1, mitochondrial (252 aa).

The transit peptide at 1-29 (MATSIARLSRRGVTSNLIRRCFAAEAALA) directs the protein to the mitochondrion. Residues 99–101 (RGD) and 114–115 (QE) contribute to the substrate site. His-120 lines the Zn(2+) pocket. Substrate-binding residues include Arg-148, Gln-160, and Tyr-227.

Belongs to the gamma-class carbonic anhydrase family. In terms of assembly, component of the mitochondrial oxidoreductase respiratory chain complex I; element of the extra matrix-exposed domain, which is attached to the membrane arm of this complex. Interacts with GAMMACA2.

Its subcellular location is the mitochondrion membrane. In terms of biological role, involved in complex I assembly in mitochondria and respiration. This is Gamma carbonic anhydrase-like 1, mitochondrial (GAMMACAL1) from Arabidopsis thaliana (Mouse-ear cress).